Reading from the N-terminus, the 132-residue chain is Transcription antitermination protein NusB (132 aa).

The protein belongs to the NusB family.

Its function is as follows. Involved in transcription antitermination. Required for transcription of ribosomal RNA (rRNA) genes. Binds specifically to the boxA antiterminator sequence of the ribosomal RNA (rrn) operons. The chain is Transcription antitermination protein NusB from Campylobacter jejuni subsp. jejuni serotype O:2 (strain ATCC 700819 / NCTC 11168).